We begin with the raw amino-acid sequence, 329 residues long: Phospho-N-acetylmuramoyl-pentapeptide-transferase (329 aa).

The next 9 helical transmembrane spans lie at 1 to 21, 53 to 73, 76 to 96, 109 to 129, 141 to 161, 175 to 195, 198 to 218, 237 to 257, and 309 to 329; these read MLLN…IGIP, MGGF…ALVF, FSPA…IGFL, GLTA…SYFI, ILSW…IWLV, GLAS…AVVH, YDVL…FVFN, FLAI…IGAV, and IVFW…YFAF.

Belongs to the glycosyltransferase 4 family. MraY subfamily. Mg(2+) is required as a cofactor.

Its subcellular location is the cell membrane. The catalysed reaction is UDP-N-acetyl-alpha-D-muramoyl-L-alanyl-gamma-D-glutamyl-L-lysyl-D-alanyl-D-alanine + di-trans,octa-cis-undecaprenyl phosphate = Mur2Ac(oyl-L-Ala-gamma-D-Glu-L-Lys-D-Ala-D-Ala)-di-trans,octa-cis-undecaprenyl diphosphate + UMP. The protein operates within cell wall biogenesis; peptidoglycan biosynthesis. Functionally, catalyzes the initial step of the lipid cycle reactions in the biosynthesis of the cell wall peptidoglycan: transfers peptidoglycan precursor phospho-MurNAc-pentapeptide from UDP-MurNAc-pentapeptide onto the lipid carrier undecaprenyl phosphate, yielding undecaprenyl-pyrophosphoryl-MurNAc-pentapeptide, known as lipid I. The protein is Phospho-N-acetylmuramoyl-pentapeptide-transferase of Lactococcus lactis subsp. cremoris (strain MG1363).